The chain runs to 372 residues: Actin-related protein T3 (372 aa).

The protein belongs to the actin family. Interacts with PFN3. As to expression, ubiquitously expressed.

Its subcellular location is the cytoplasm. The protein localises to the cytoskeleton. It localises to the nucleus. The sequence is that of Actin-related protein T3 (ACTRT3) from Homo sapiens (Human).